The sequence spans 159 residues: MSFRIGHGYDVHKFTSAKQNIIIGGVEIAYHLGLEAHSDGDVLIHALCDAILGALGLGDIGKHFLDTDNQFKNIDSKFFLAEIKKMLDEKQYSISNIDCTIIAQAPKMLPHIEKMRACLANILEIQISQINIKATTTERLGFIGREEGIATHVVCLLYR.

Asp10 and His12 together coordinate a divalent metal cation. 4-CDP-2-C-methyl-D-erythritol 2-phosphate-binding positions include 10-12 (DVH) and 37-38 (HS). His45 serves as a coordination point for a divalent metal cation. 4-CDP-2-C-methyl-D-erythritol 2-phosphate is bound by residues 59 to 61 (DIG), 64 to 68 (FLDTD), 103 to 109 (AQAPKML), 135 to 138 (TTTE), Phe142, and Arg145.

This sequence belongs to the IspF family. Homotrimer. Requires a divalent metal cation as cofactor.

The enzyme catalyses 4-CDP-2-C-methyl-D-erythritol 2-phosphate = 2-C-methyl-D-erythritol 2,4-cyclic diphosphate + CMP. Its pathway is isoprenoid biosynthesis; isopentenyl diphosphate biosynthesis via DXP pathway; isopentenyl diphosphate from 1-deoxy-D-xylulose 5-phosphate: step 4/6. Functionally, involved in the biosynthesis of isopentenyl diphosphate (IPP) and dimethylallyl diphosphate (DMAPP), two major building blocks of isoprenoid compounds. Catalyzes the conversion of 4-diphosphocytidyl-2-C-methyl-D-erythritol 2-phosphate (CDP-ME2P) to 2-C-methyl-D-erythritol 2,4-cyclodiphosphate (ME-CPP) with a corresponding release of cytidine 5-monophosphate (CMP). The chain is 2-C-methyl-D-erythritol 2,4-cyclodiphosphate synthase from Francisella tularensis subsp. holarctica (strain FTNF002-00 / FTA).